A 150-amino-acid chain; its full sequence is UPF0756 membrane protein ABAYE1440 (150 aa).

A run of 4 helical transmembrane segments spans residues Met1–Leu21, Phe45–Val65, Phe83–Gly103, and Val115–Val135.

Belongs to the UPF0756 family.

It is found in the cell membrane. The polypeptide is UPF0756 membrane protein ABAYE1440 (Acinetobacter baumannii (strain AYE)).